Consider the following 204-residue polypeptide: Inner membrane-spanning protein YciB (204 aa).

Helical transmembrane passes span 48-68, 73-93, 102-122, 147-167, and 170-190; these read ILFA…LYFF, FESM…ATLM, WKPT…QLFT, GAWI…AYAF, and AVWV…FVVG.

Belongs to the YciB family.

The protein localises to the cell inner membrane. In terms of biological role, plays a role in cell envelope biogenesis, maintenance of cell envelope integrity and membrane homeostasis. This Nitrosococcus oceani (strain ATCC 19707 / BCRC 17464 / JCM 30415 / NCIMB 11848 / C-107) protein is Inner membrane-spanning protein YciB.